The primary structure comprises 137 residues: Large ribosomal subunit protein uL16 (137 aa).

Residues 1-13 (MLQPSRRKYRKEQ) are compositionally biased toward basic residues. The disordered stretch occupies residues 1–22 (MLQPSRRKYRKEQKGRNTGLAT).

This sequence belongs to the universal ribosomal protein uL16 family. Part of the 50S ribosomal subunit.

Functionally, binds 23S rRNA and is also seen to make contacts with the A and possibly P site tRNAs. This is Large ribosomal subunit protein uL16 from Azoarcus sp. (strain BH72).